Consider the following 571-residue polypeptide: Proline--tRNA ligase (571 aa).

The protein belongs to the class-II aminoacyl-tRNA synthetase family. ProS type 1 subfamily. Homodimer.

It is found in the cytoplasm. It carries out the reaction tRNA(Pro) + L-proline + ATP = L-prolyl-tRNA(Pro) + AMP + diphosphate. Functionally, catalyzes the attachment of proline to tRNA(Pro) in a two-step reaction: proline is first activated by ATP to form Pro-AMP and then transferred to the acceptor end of tRNA(Pro). As ProRS can inadvertently accommodate and process non-cognate amino acids such as alanine and cysteine, to avoid such errors it has two additional distinct editing activities against alanine. One activity is designated as 'pretransfer' editing and involves the tRNA(Pro)-independent hydrolysis of activated Ala-AMP. The other activity is designated 'posttransfer' editing and involves deacylation of mischarged Ala-tRNA(Pro). The misacylated Cys-tRNA(Pro) is not edited by ProRS. This is Proline--tRNA ligase from Azotobacter vinelandii (strain DJ / ATCC BAA-1303).